The primary structure comprises 215 residues: Protein-L-isoaspartate O-methyltransferase (215 aa).

Serine 62 is a catalytic residue.

Belongs to the methyltransferase superfamily. L-isoaspartyl/D-aspartyl protein methyltransferase family.

The protein localises to the cytoplasm. It carries out the reaction [protein]-L-isoaspartate + S-adenosyl-L-methionine = [protein]-L-isoaspartate alpha-methyl ester + S-adenosyl-L-homocysteine. Catalyzes the methyl esterification of L-isoaspartyl residues in peptides and proteins that result from spontaneous decomposition of normal L-aspartyl and L-asparaginyl residues. It plays a role in the repair and/or degradation of damaged proteins. The chain is Protein-L-isoaspartate O-methyltransferase from Ruegeria sp. (strain TM1040) (Silicibacter sp.).